The following is an 82-amino-acid chain: MKLTCMMIVAVLFLTAWTLVMADDSNNGLANHFLKSRDEMEDPEASKLEKRACSKKWEYCIVPILGFVYCCPGLICGPFVCV.

Residues 1–22 (MKLTCMMIVAVLFLTAWTLVMA) form the signal peptide. The propeptide occupies 23-49 (DDSNNGLANHFLKSRDEMEDPEASKLE). 3 disulfides stabilise this stretch: cysteine 53-cysteine 71, cysteine 60-cysteine 76, and cysteine 70-cysteine 81.

Belongs to the conotoxin O1 superfamily. In terms of tissue distribution, expressed by the venom duct.

The protein resides in the secreted. MuO-conotoxins are gating-modifier toxins that inhibit sodium current by trapping the domain II voltage sensor in the closed position to prevent opening of the sodium channel. This toxin has a preference for Nav1.4/SCN4A over Nav1.2/SCN2A sodium channels. It blocks Nav channels by interacting mainly with the C-terminal part of the pore loop of domain-3. It also blocks fast-inactivating calcium current. Blocks Nav1.8/SCN10A sodium channels and has potent and long-lasting local anesthetic effects. It can also block propagation of action potentials in A- and C-fibers in sciatic nerve as well as skeletal muscle in isolated preparations. The protein is Mu-conotoxin MrVIB of Conus marmoreus (Marble cone).